Consider the following 384-residue polypeptide: 8-amino-7-oxononanoate synthase (384 aa).

R21 contacts substrate. 108-109 provides a ligand contact to pyridoxal 5'-phosphate; that stretch reads GF. H133 contributes to the substrate binding site. Residues S179, H207, and T233 each contribute to the pyridoxal 5'-phosphate site. At K236 the chain carries N6-(pyridoxal phosphate)lysine. T352 serves as a coordination point for substrate.

It belongs to the class-II pyridoxal-phosphate-dependent aminotransferase family. BioF subfamily. In terms of assembly, homodimer. Pyridoxal 5'-phosphate serves as cofactor.

It catalyses the reaction 6-carboxyhexanoyl-[ACP] + L-alanine + H(+) = (8S)-8-amino-7-oxononanoate + holo-[ACP] + CO2. Its pathway is cofactor biosynthesis; biotin biosynthesis. Its function is as follows. Catalyzes the decarboxylative condensation of pimeloyl-[acyl-carrier protein] and L-alanine to produce 8-amino-7-oxononanoate (AON), [acyl-carrier protein], and carbon dioxide. This chain is 8-amino-7-oxononanoate synthase, found in Shigella flexneri serotype 5b (strain 8401).